Reading from the N-terminus, the 306-residue chain is Aspartate carbamoyltransferase catalytic subunit (306 aa).

2 residues coordinate carbamoyl phosphate: arginine 56 and threonine 57. Lysine 84 is a binding site for L-aspartate. Carbamoyl phosphate contacts are provided by arginine 106, histidine 136, and glutamine 139. The L-aspartate site is built by arginine 169 and arginine 221. Carbamoyl phosphate is bound by residues alanine 262 and proline 263.

The protein belongs to the aspartate/ornithine carbamoyltransferase superfamily. ATCase family. As to quaternary structure, heterododecamer (2C3:3R2) of six catalytic PyrB chains organized as two trimers (C3), and six regulatory PyrI chains organized as three dimers (R2).

The catalysed reaction is carbamoyl phosphate + L-aspartate = N-carbamoyl-L-aspartate + phosphate + H(+). It functions in the pathway pyrimidine metabolism; UMP biosynthesis via de novo pathway; (S)-dihydroorotate from bicarbonate: step 2/3. In terms of biological role, catalyzes the condensation of carbamoyl phosphate and aspartate to form carbamoyl aspartate and inorganic phosphate, the committed step in the de novo pyrimidine nucleotide biosynthesis pathway. The polypeptide is Aspartate carbamoyltransferase catalytic subunit (Streptococcus gordonii (strain Challis / ATCC 35105 / BCRC 15272 / CH1 / DL1 / V288)).